Here is a 228-residue protein sequence, read N- to C-terminus: GDT1-like protein 5 (228 aa).

The residue at position 2 (glycine 2) is an N-acetylglycine. The next 6 membrane-spanning stretches (helical) occupy residues 12–32 (LAMTFLSEIGDKTFFAAAILA), 39–59 (LVLAGCLSALIVMTILSATLG), 71–91 (THHITTFLFFGFGLWSLWDGF), 133–153 (PFLTAFFSPIFLKAFSINFFG), 173–193 (LGVVLGGIVAQTLCTTAAVLG), and 205–225 (IVALSGGMLFIIFGIQSLLTP).

This sequence belongs to the GDT1 family.

Its subcellular location is the membrane. This Arabidopsis thaliana (Mouse-ear cress) protein is GDT1-like protein 5.